An 82-amino-acid chain; its full sequence is Putative membrane protein insertion efficiency factor (82 aa).

It belongs to the UPF0161 family.

Its subcellular location is the cell inner membrane. Functionally, could be involved in insertion of integral membrane proteins into the membrane. The protein is Putative membrane protein insertion efficiency factor of Francisella tularensis subsp. holarctica (strain LVS).